The primary structure comprises 132 residues: Inclusion membrane protein E (132 aa).

2 consecutive transmembrane segments (helical) span residues 41 to 61 (LGVVCSIICLALGIAAAAVGV) and 66 to 86 (FALGLGIIAILLGIVLFATSA).

It is found in the secreted. It localises to the host vacuole. Its subcellular location is the host pathogen-containing vacuole. The protein resides in the host pathogen-containing vacuole membrane. Functionally, inclusion membrane protein probably involved in early modification events of the chlamydial inclusion. In Chlamydia trachomatis serovar L2 (strain ATCC VR-902B / DSM 19102 / 434/Bu), this protein is Inclusion membrane protein E.